We begin with the raw amino-acid sequence, 407 residues long: Phosphopentomutase (407 aa).

Residues aspartate 10, aspartate 306, histidine 311, aspartate 347, histidine 348, and histidine 359 each contribute to the Mn(2+) site.

The protein belongs to the phosphopentomutase family. The cofactor is Mn(2+).

The protein localises to the cytoplasm. It catalyses the reaction 2-deoxy-alpha-D-ribose 1-phosphate = 2-deoxy-D-ribose 5-phosphate. The enzyme catalyses alpha-D-ribose 1-phosphate = D-ribose 5-phosphate. It participates in carbohydrate degradation; 2-deoxy-D-ribose 1-phosphate degradation; D-glyceraldehyde 3-phosphate and acetaldehyde from 2-deoxy-alpha-D-ribose 1-phosphate: step 1/2. In terms of biological role, isomerase that catalyzes the conversion of deoxy-ribose 1-phosphate (dRib-1-P) and ribose 1-phosphate (Rib-1-P) to deoxy-ribose 5-phosphate (dRib-5-P) and ribose 5-phosphate (Rib-5-P), respectively. In Salmonella arizonae (strain ATCC BAA-731 / CDC346-86 / RSK2980), this protein is Phosphopentomutase.